Reading from the N-terminus, the 325-residue chain is Forkhead box protein B1 (325 aa).

A DNA-binding region (fork-head) is located at residues 12–103; it reads QKPPYSYISL…GDMFENGSFL (92 aa). A compositionally biased stretch (low complexity) spans 284–309; the sequence is LSNSPPSLSPTSSQTATSQSSPATPS. The disordered stretch occupies residues 284-325; the sequence is LSNSPPSLSPTSSQTATSQSSPATPSETLTSPASALHSVAVH.

The protein resides in the nucleus. Functionally, transcription factor expressed by neural progenitor cells in specific regions of the embryonic neuroepithelium. Essential for the mammillary nuclei maintenance. Negatively regulates the proliferation of oligodendrocyte progenitors and promotes oligodendrocyte maturation. Also expressed in mammary glands, plays a role in lactation, controls development of mammary glands and the inferior colliculi of the midbrain in the central nervous system that regulates the milk-ejection reflex. In Homo sapiens (Human), this protein is Forkhead box protein B1 (FOXB1).